A 24-amino-acid chain; its full sequence is Prokineticin 1-like protein (24 aa).

The cysteines at positions 7 and 19 are disulfide-linked.

As to expression, expressed by the skin glands.

The protein resides in the secreted. Functionally, stimulates insulin secretion by BRIN-BD11 cells in vitro. The polypeptide is Prokineticin 1-like protein (Pelophylax saharicus (Sahara frog)).